The following is a 128-amino-acid chain: Large ribosomal subunit protein bL12 (128 aa).

The protein belongs to the bacterial ribosomal protein bL12 family. Homodimer. Part of the ribosomal stalk of the 50S ribosomal subunit. Forms a multimeric L10(L12)X complex, where L10 forms an elongated spine to which 2 to 4 L12 dimers bind in a sequential fashion. Binds GTP-bound translation factors.

Its function is as follows. Forms part of the ribosomal stalk which helps the ribosome interact with GTP-bound translation factors. Is thus essential for accurate translation. The sequence is that of Large ribosomal subunit protein bL12 from Sulfurihydrogenibium sp. (strain YO3AOP1).